The primary structure comprises 123 residues: uncharacterized protein (123 aa).

This is an uncharacterized protein from Shigella boydii serotype 4 (strain Sb227).